A 197-amino-acid polypeptide reads, in one-letter code: RILP-like protein 2 (197 aa).

The RH1 domain maps to 14–96 (EDEGALAKSP…KQEVEGLRRA (83 aa)). Residues 65–153 (LEALVNEGSL…VQEELQCYRS (89 aa)) are a coiled coil. The RH2 domain maps to 119–184 (RPRFTLQELR…GNGEKEERTI (66 aa)).

In terms of assembly, homodimer. Interacts (via N-terminus) with MYO5A, the interaction is required for its role in dendrite formation. Interacts with RAC1. Interacts with RAB8A; interaction is dependent on the phosphorylation of RAB8A on 'Thr-72'. Interacts with RAB10 and RAB12; interaction is dependent on the phosphorylation of 'Thr-73' on RAB10 and 'Ser-105' on RAB12.

It localises to the cytoplasm. Its subcellular location is the cytosol. The protein localises to the cytoskeleton. It is found in the microtubule organizing center. The protein resides in the centrosome. It localises to the cell projection. Its subcellular location is the cilium. Involved in cell shape and neuronal morphogenesis, positively regulating the establishment and maintenance of dendritic spines. Plays a role in cellular protein transport, including protein transport away from primary cilia. May function via activation of RAC1 and PAK1. This chain is RILP-like protein 2 (Rilpl2), found in Rattus norvegicus (Rat).